The sequence spans 306 residues: MFKFTAQQHVYDINGVKVGGQPGEYPTVLIGSIFYRGHKIVSDGQKGIFDKDAAKALLDQEAELSAETGNPFIIDVLGESVEALTKYVEFILENTTAPFLLDSISPDVRVGALKNLGKDPEIQKRLIYNSIEEHYTEEELAAIKEAGLKTAVILAFSKKALKPNARIDLLQGKDDKEGLIAAAKRAGIEQFLVDPGVLDVASNSWTTEAINVVKEQFGYPGGCAPSNAVYLWKKMRSKGTPFFEVAGAAVFTYPITQGADFILYGPMMNAPWVYRAIATTDAMIAYNNKLTGVKMGTTEHPLLKIF.

The protein belongs to the MtrH family.

It catalyses the reaction methyl-Co(III)-[glycine betaine-specific corrinoid protein] + (6S)-5,6,7,8-tetrahydrofolate = Co(I)-[glycine betaine-specific corrinoid protein] + (6S)-5-methyl-5,6,7,8-tetrahydrofolate + H(+). Methyltransferase able to catalyze the transfer of a methyl group from methylcobalamin (methylCbl) to tetrahydrofolate (THF) in vitro, to generate methyl-THF and cob(I)alamin. In vivo, the methyl group probably comes from the adjacently encoded methylated corrinoid protein DSY3155. The methyl group may then be ultimately converted to carbon dioxide, and its oxidation would also provide reducing equivalents for anaerobic respiration. Thus, may function in the pathway that allows anaerobic methylotrophic growth of D.hafniense using glycine betaine. In Desulfitobacterium hafniense (strain Y51), this protein is [methyl-Co(III) glycine betaine-specific corrinoid protein]--tetrahydrofolate methyltransferase.